The sequence spans 55 residues: MAVPKKRTSTSKKRIRKNIWKRKGYWVALKAFSLAKSLSTGNSKSFFVRQTKINK.

This sequence belongs to the bacterial ribosomal protein bL32 family.

The protein resides in the plastid. Its subcellular location is the chloroplast. This chain is Large ribosomal subunit protein bL32c, found in Atropa belladonna (Belladonna).